Consider the following 616-residue polypeptide: MAU2 chromatid cohesion factor homolog (616 aa).

3 TPR repeats span residues 90 to 123 (FDTA…SQHN), 445 to 478 (GSFY…ANAE), and 485 to 518 (SCSL…ASKI).

Belongs to the SCC4/mau-2 family. Component of the cohesin loading complex.

The protein localises to the nucleus. The protein resides in the nucleoplasm. In terms of biological role, required for association of the cohesin complex with chromatin during interphase. Plays a role in sister chromatid cohesion and normal progression through prometaphase. This Culex quinquefasciatus (Southern house mosquito) protein is MAU2 chromatid cohesion factor homolog.